A 198-amino-acid polypeptide reads, in one-letter code: NAD(P)H dehydrogenase (quinone) (198 aa).

The 185-residue stretch at 6-190 (ILVLYYSRHG…LCRALGKRLA (185 aa)) folds into the Flavodoxin-like domain. FMN contacts are provided by residues 12–17 (SRHGAT), 79–81 (TRF), 114–120 (STASLHG), and His135.

This sequence belongs to the WrbA family. Homodimer. Requires FMN as cofactor.

The catalysed reaction is a quinone + NADH + H(+) = a quinol + NAD(+). It carries out the reaction a quinone + NADPH + H(+) = a quinol + NADP(+). The polypeptide is NAD(P)H dehydrogenase (quinone) (Pseudomonas aeruginosa (strain ATCC 15692 / DSM 22644 / CIP 104116 / JCM 14847 / LMG 12228 / 1C / PRS 101 / PAO1)).